Reading from the N-terminus, the 444-residue chain is ATPase PAAT (444 aa).

Phosphoserine is present on residues serine 177, serine 182, and serine 254. The disordered stretch occupies residues 279–300 (SAQPSGEGNTTNHDEGHLMPQN). The span at 280 to 289 (AQPSGEGNTT) shows a compositional bias: polar residues. At serine 302 the chain carries Phosphoserine. Positions 424-444 (PPPGMPLRHYDSRERLSNGER) are disordered. Residues 431–444 (RHYDSRERLSNGER) are compositionally biased toward basic and acidic residues.

Homodimer. Interacts with ABCB7, ABCB8/MITOSUR and ABCB10.

It localises to the cytoplasm. The protein resides in the mitochondrion. The catalysed reaction is ATP + H2O = ADP + phosphate + H(+). Its function is as follows. ATPase that regulates mitochondrial ABC transporters ABCB7, ABCB8/MITOSUR and ABCB10. Regulates mitochondrial ferric concentration and heme biosynthesis and plays a role in the maintenance of mitochondrial homeostasis and cell survival. The polypeptide is ATPase PAAT (Mus musculus (Mouse)).